A 553-amino-acid chain; its full sequence is Putative transport protein YidE (553 aa).

Helical transmembrane passes span 4-24 (IALT…IGNV), 28-48 (GVGL…HFVS), 65-85 (FGLI…FFAS), 95-115 (LFAV…HKLF), and 158-178 (MSYA…MWML). RCK C-terminal domains follow at residues 191–276 (QQHE…VIGQ) and 279–361 (DTSL…VLGN). 6 consecutive transmembrane segments (helical) span residues 371–391 (MLPV…PVFV), 393–413 (GFPA…ALIL), 439–459 (IVLF…HTLV), 464–484 (LSWI…VGIL), 493–513 (YLTM…LAFA), and 533–553 (LVMF…WSIG).

Belongs to the AAE transporter (TC 2.A.81) family. YidE subfamily.

The protein localises to the cell membrane. This chain is Putative transport protein YidE, found in Escherichia coli O127:H6 (strain E2348/69 / EPEC).